Reading from the N-terminus, the 372-residue chain is Hydrogenase-2 small chain (372 aa).

The segment at residues 1–37 (MTGDNTLIHSHGINRRDFMKLCAALAATMGLSSKAAA) is a signal peptide (tat-type signal). [4Fe-4S] cluster contacts are provided by Cys-59, Cys-62, Cys-157, Cys-191, His-229, Cys-232, Cys-257, and Cys-263. Cys-272, Cys-292, and Cys-295 together coordinate [3Fe-4S] cluster.

It belongs to the [NiFe]/[NiFeSe] hydrogenase small subunit family. As to quaternary structure, heterodimer of a large and a small subunit. The cofactor is [4Fe-4S] cluster. Requires [3Fe-4S] cluster as cofactor. In terms of processing, predicted to be exported by the Tat system. The position of the signal peptide cleavage has not been experimentally proven.

It is found in the cell membrane. Its subcellular location is the periplasm. The enzyme catalyses H2 + A = AH2. In terms of biological role, this is one of three E.coli hydrogenases synthesized in response to different physiological conditions. HYD2 is involved in hydrogen uptake. This Escherichia coli O157:H7 protein is Hydrogenase-2 small chain (hybO).